The primary structure comprises 93 residues: Large ribosomal subunit protein bL31 (93 aa).

Residues 68-93 (GSADAAADEKKPDAKNNNKDNTSKED) are disordered. Residues 74 to 93 (ADEKKPDAKNNNKDNTSKED) show a composition bias toward basic and acidic residues.

The protein belongs to the bacterial ribosomal protein bL31 family. Type A subfamily. As to quaternary structure, part of the 50S ribosomal subunit.

Functionally, binds the 23S rRNA. The polypeptide is Large ribosomal subunit protein bL31 (Prochlorococcus marinus (strain MIT 9313)).